The sequence spans 314 residues: uncharacterized protein (314 aa).

This is an uncharacterized protein from Acanthamoeba polyphaga mimivirus (APMV).